We begin with the raw amino-acid sequence, 459 residues long: Argininosuccinate lyase (459 aa).

This sequence belongs to the lyase 1 family. Argininosuccinate lyase subfamily.

The protein localises to the cytoplasm. The enzyme catalyses 2-(N(omega)-L-arginino)succinate = fumarate + L-arginine. The protein operates within amino-acid biosynthesis; L-arginine biosynthesis; L-arginine from L-ornithine and carbamoyl phosphate: step 3/3. The protein is Argininosuccinate lyase of Geobacillus thermodenitrificans (strain NG80-2).